Consider the following 130-residue polypeptide: Phosphoribosyl-AMP cyclohydrolase (130 aa).

Asp-80 is a Mg(2+) binding site. Cys-81 provides a ligand contact to Zn(2+). Mg(2+) is bound by residues Asp-82 and Asp-84. Zn(2+) contacts are provided by Cys-98 and Cys-105.

This sequence belongs to the PRA-CH family. Homodimer. Mg(2+) is required as a cofactor. The cofactor is Zn(2+).

It is found in the cytoplasm. It carries out the reaction 1-(5-phospho-beta-D-ribosyl)-5'-AMP + H2O = 1-(5-phospho-beta-D-ribosyl)-5-[(5-phospho-beta-D-ribosylamino)methylideneamino]imidazole-4-carboxamide. The protein operates within amino-acid biosynthesis; L-histidine biosynthesis; L-histidine from 5-phospho-alpha-D-ribose 1-diphosphate: step 3/9. In terms of biological role, catalyzes the hydrolysis of the adenine ring of phosphoribosyl-AMP. In Oleidesulfovibrio alaskensis (strain ATCC BAA-1058 / DSM 17464 / G20) (Desulfovibrio alaskensis), this protein is Phosphoribosyl-AMP cyclohydrolase.